A 91-amino-acid polypeptide reads, in one-letter code: ATP synthase subunit c 1 (91 aa).

2 helical membrane passes run 4 to 24 and 53 to 73; these read FTMC…GTAI and IGLA…LIIL.

Belongs to the ATPase C chain family. In terms of assembly, F-type ATPases have 2 components, F(1) - the catalytic core - and F(0) - the membrane proton channel. F(1) has five subunits: alpha(3), beta(3), gamma(1), delta(1), epsilon(1). F(0) has three main subunits: a(1), b(2) and c(10-14). The alpha and beta chains form an alternating ring which encloses part of the gamma chain. F(1) is attached to F(0) by a central stalk formed by the gamma and epsilon chains, while a peripheral stalk is formed by the delta and b chains.

The protein localises to the cell inner membrane. F(1)F(0) ATP synthase produces ATP from ADP in the presence of a proton or sodium gradient. F-type ATPases consist of two structural domains, F(1) containing the extramembraneous catalytic core and F(0) containing the membrane proton channel, linked together by a central stalk and a peripheral stalk. During catalysis, ATP synthesis in the catalytic domain of F(1) is coupled via a rotary mechanism of the central stalk subunits to proton translocation. In terms of biological role, key component of the F(0) channel; it plays a direct role in translocation across the membrane. A homomeric c-ring of between 10-14 subunits forms the central stalk rotor element with the F(1) delta and epsilon subunits. The protein is ATP synthase subunit c 1 of Pelobacter propionicus (strain DSM 2379 / NBRC 103807 / OttBd1).